We begin with the raw amino-acid sequence, 24 residues long: YIELAVVADHGIFTKYNSNLNTIR.

Positions Tyr1–Arg24 constitute a Peptidase M12B domain. Glu3 lines the Ca(2+) pocket.

It belongs to the venom metalloproteinase (M12B) family. P-I subfamily. Monomer. Zn(2+) serves as cofactor. In terms of processing, the N-terminus is blocked. Contains 3 disulfide bonds. In terms of tissue distribution, expressed by the venom gland.

It localises to the secreted. Inhibited by EDTA, and o-phenanthroline, but not inhibited by PMSF, pepstatin A, and aprotinin. Zinc metalloproteinase that exhits a weak hemorrhagic activity. Degrades preferentially the Aalpha- (FGA) and Bbeta-chains (FGB) of fibrinogen, and partially degrades gamma-chain (FGG) at higher concentration. Induces a mild myotoxicity, but lacks coagulant activity on human plasma or bovin fibrinogen and defibrinating activity. In Bothrops atrox (Barba amarilla), this protein is Snake venom metalloproteinase Batx-1.